Reading from the N-terminus, the 171-residue chain is Ribosome maturation factor RimP (171 aa).

It belongs to the RimP family.

It is found in the cytoplasm. Functionally, required for maturation of 30S ribosomal subunits. This Anaeromyxobacter sp. (strain Fw109-5) protein is Ribosome maturation factor RimP.